A 489-amino-acid chain; its full sequence is Ribulose bisphosphate carboxylase large chain (489 aa).

The substrate site is built by N128 and T178. K180 serves as the catalytic Proton acceptor. K182 is a substrate binding site. Mg(2+) is bound by residues K206, D208, and E209. At K206 the chain carries N6-carboxylysine. H298 (proton acceptor) is an active-site residue. R299, H331, and S383 together coordinate substrate.

Belongs to the RuBisCO large chain family. Type I subfamily. In terms of assembly, heterohexadecamer of 8 large chains and 8 small chains. Mg(2+) serves as cofactor.

The enzyme catalyses 2 (2R)-3-phosphoglycerate + 2 H(+) = D-ribulose 1,5-bisphosphate + CO2 + H2O. It catalyses the reaction D-ribulose 1,5-bisphosphate + O2 = 2-phosphoglycolate + (2R)-3-phosphoglycerate + 2 H(+). Functionally, ruBisCO catalyzes two reactions: the carboxylation of D-ribulose 1,5-bisphosphate, the primary event in carbon dioxide fixation, as well as the oxidative fragmentation of the pentose substrate. Both reactions occur simultaneously and in competition at the same active site. The polypeptide is Ribulose bisphosphate carboxylase large chain (Nitrosospira sp. (strain 40KI)).